Reading from the N-terminus, the 451-residue chain is Tubulin alpha-1 chain (451 aa).

Gln11 contacts GTP. Lys40 carries the N6-acetyllysine modification. GTP-binding residues include Glu71, Thr145, Thr179, Asn206, and Asn228. Glu71 is a binding site for Mg(2+). The active site involves Glu254. The segment at 429-451 (EKDYEEVGAESGEGEEGDEGEEY) is disordered. Residues 431-451 (DYEEVGAESGEGEEGDEGEEY) show a composition bias toward acidic residues.

It belongs to the tubulin family. As to quaternary structure, dimer of alpha and beta chains. A typical microtubule is a hollow water-filled tube with an outer diameter of 25 nm and an inner diameter of 15 nM. Alpha-beta heterodimers associate head-to-tail to form protofilaments running lengthwise along the microtubule wall with the beta-tubulin subunit facing the microtubule plus end conferring a structural polarity. Microtubules usually have 13 protofilaments but different protofilament numbers can be found in some organisms and specialized cells. Mg(2+) is required as a cofactor. In terms of processing, undergoes a tyrosination/detyrosination cycle, the cyclic removal and re-addition of a C-terminal tyrosine residue by the enzymes tubulin tyrosine carboxypeptidase (TTCP) and tubulin tyrosine ligase (TTL), respectively. Acetylation of alpha chains at Lys-40 stabilizes microtubules and affects affinity and processivity of microtubule motors. This modification has a role in multiple cellular functions, ranging from cell motility, cell cycle progression or cell differentiation to intracellular trafficking and signaling.

Its subcellular location is the cytoplasm. It is found in the cytoskeleton. The enzyme catalyses GTP + H2O = GDP + phosphate + H(+). In terms of biological role, tubulin is the major constituent of microtubules, a cylinder consisting of laterally associated linear protofilaments composed of alpha- and beta-tubulin heterodimers. Microtubules grow by the addition of GTP-tubulin dimers to the microtubule end, where a stabilizing cap forms. Below the cap, tubulin dimers are in GDP-bound state, owing to GTPase activity of alpha-tubulin. In Anemia phyllitidis (Fern), this protein is Tubulin alpha-1 chain (TUBA1).